The primary structure comprises 152 residues: Ribosome maturation factor RimP (152 aa).

It belongs to the RimP family.

The protein localises to the cytoplasm. Functionally, required for maturation of 30S ribosomal subunits. This is Ribosome maturation factor RimP from Clostridium beijerinckii (strain ATCC 51743 / NCIMB 8052) (Clostridium acetobutylicum).